A 494-amino-acid chain; its full sequence is Ribose import ATP-binding protein RbsA (494 aa).

ABC transporter domains are found at residues 2-239 (IDMR…VGRQ) and 251-493 (IGEE…TGGN). Residue 34–41 (GENGAGKS) participates in ATP binding.

It belongs to the ABC transporter superfamily. Ribose importer (TC 3.A.1.2.1) family. As to quaternary structure, the complex is composed of an ATP-binding protein (RbsA), two transmembrane proteins (RbsC) and a solute-binding protein (RbsB).

The protein resides in the cell membrane. The enzyme catalyses D-ribose(out) + ATP + H2O = D-ribose(in) + ADP + phosphate + H(+). Part of the ABC transporter complex RbsABC involved in ribose import. Responsible for energy coupling to the transport system. This chain is Ribose import ATP-binding protein RbsA, found in Geobacillus kaustophilus (strain HTA426).